The primary structure comprises 314 residues: Ribosomal protein L11 methyltransferase (314 aa).

S-adenosyl-L-methionine-binding residues include T166, G187, D209, and N251.

It belongs to the methyltransferase superfamily. PrmA family.

The protein resides in the cytoplasm. It carries out the reaction L-lysyl-[protein] + 3 S-adenosyl-L-methionine = N(6),N(6),N(6)-trimethyl-L-lysyl-[protein] + 3 S-adenosyl-L-homocysteine + 3 H(+). Its function is as follows. Methylates ribosomal protein L11. The polypeptide is Ribosomal protein L11 methyltransferase (Clostridium tetani (strain Massachusetts / E88)).